Reading from the N-terminus, the 460-residue chain is Signal recognition particle 54 kDa protein (460 aa).

Residues 104-111, 184-188, and 242-245 each bind GTP; these read GLQGSGKT, DTAGR, and TKLD.

The protein belongs to the GTP-binding SRP family. SRP54 subfamily. In terms of assembly, part of the signal recognition particle protein translocation system, which is composed of SRP and FtsY. Archaeal SRP consists of a 7S RNA molecule of 300 nucleotides and two protein subunits: SRP54 and SRP19.

The protein resides in the cytoplasm. The enzyme catalyses GTP + H2O = GDP + phosphate + H(+). Its function is as follows. Involved in targeting and insertion of nascent membrane proteins into the cytoplasmic membrane. Binds to the hydrophobic signal sequence of the ribosome-nascent chain (RNC) as it emerges from the ribosomes. The SRP-RNC complex is then targeted to the cytoplasmic membrane where it interacts with the SRP receptor FtsY. The polypeptide is Signal recognition particle 54 kDa protein (Halobacterium salinarum (strain ATCC 29341 / DSM 671 / R1)).